A 365-amino-acid chain; its full sequence is Peptide chain release factor 2 (365 aa).

Q252 carries the post-translational modification N5-methylglutamine.

Belongs to the prokaryotic/mitochondrial release factor family. In terms of processing, methylated by PrmC. Methylation increases the termination efficiency of RF2.

It localises to the cytoplasm. Functionally, peptide chain release factor 2 directs the termination of translation in response to the peptide chain termination codons UGA and UAA. This Aliivibrio fischeri (strain ATCC 700601 / ES114) (Vibrio fischeri) protein is Peptide chain release factor 2.